Consider the following 209-residue polypeptide: MGAILGKKIGMTRLYNDKREAVPCTVIQAGPCYVTQVKSTEKDGYEAYQLGFGERDEKKVSKPLAGHYKKAGKNPGYILSEVSKSLIVGELEAGATVPVDVFKEGDKVNVLGVTKGKGFAGVVKRHNFGGGSRTHGQSDRLRAPGSVGGSSDPSRTFKGTRMAGRMGGKNKTVQNLVIVKVMPESNLIVVKGAVPGPKNSYVKIVSTTK.

Residues asparagine 127–methionine 166 form a disordered region.

This sequence belongs to the universal ribosomal protein uL3 family. In terms of assembly, part of the 50S ribosomal subunit. Forms a cluster with proteins L14 and L19.

In terms of biological role, one of the primary rRNA binding proteins, it binds directly near the 3'-end of the 23S rRNA, where it nucleates assembly of the 50S subunit. The chain is Large ribosomal subunit protein uL3 from Chlorobaculum tepidum (strain ATCC 49652 / DSM 12025 / NBRC 103806 / TLS) (Chlorobium tepidum).